A 292-amino-acid chain; its full sequence is AKT-interacting protein (292 aa).

The interval 1–63 is disordered; that stretch reads MNPLWSMSAG…TSPAPAAQST (63 aa). Positions 14–23 are enriched in basic and acidic residues; that stretch reads KRAEGEEKTL. Position 30 is a phosphoserine (S30). Residues 74-222 enclose the UBC core domain; it reads YLEYSLLAEF…VVDSVKVCTA (149 aa).

The protein belongs to the ubiquitin-conjugating enzyme family. FTS subfamily. Component of the FTS/Hook/FHIP complex (FHF complex), composed of AKTIP/FTS, FHIP1B, and one or more members of the Hook family of proteins HOOK1, HOOK2, and HOOK3. Interacts directly with HOOK1, HOOK2 and HOOK3. The FHF complex associates with the homotypic vesicular sorting complex (the HOPS complex). Also interacts with AKT1. May interact with FHIP1A. As to expression, ubiquitous. Highest expression in kidney, testis and brain and lowest in spleen and liver.

Its subcellular location is the cytoplasm. The protein localises to the cell membrane. Its function is as follows. Component of the FTS/Hook/FHIP complex (FHF complex). The FHF complex may function to promote vesicle trafficking and/or fusion via the homotypic vesicular protein sorting complex (the HOPS complex). Regulates apoptosis by enhancing phosphorylation and activation of AKT1. Increases release of TNFSF6 via the AKT1/GSK3B/NFATC1 signaling cascade. FHF complex promotes the distribution of AP-4 complex to the perinuclear area of the cell. In Mus musculus (Mouse), this protein is AKT-interacting protein (Aktip).